Reading from the N-terminus, the 492-residue chain is Phosphoenolpyruvate carboxylase (492 aa).

The protein belongs to the PEPCase type 2 family. Homotetramer. Mg(2+) is required as a cofactor.

It carries out the reaction oxaloacetate + phosphate = phosphoenolpyruvate + hydrogencarbonate. Functionally, catalyzes the irreversible beta-carboxylation of phosphoenolpyruvate (PEP) to form oxaloacetate (OAA), a four-carbon dicarboxylic acid source for the tricarboxylic acid cycle. The protein is Phosphoenolpyruvate carboxylase of Halobacterium salinarum (strain ATCC 29341 / DSM 671 / R1).